Consider the following 206-residue polypeptide: Transcription elongation factor A protein-like 5 (206 aa).

Residues 1 to 26 are compositionally biased toward basic and acidic residues; that stretch reads MEKLYKENEGKPENERNLESEGKPED. A disordered region spans residues 1–206; sequence MEKLYKENEG…QKDLEDVPYV (206 aa). The segment covering 27–42 has biased composition (acidic residues); that stretch reads EGSTEDEGKSDEEEKP. Basic and acidic residues predominate over residues 43–56; it reads DMEGKTECEGKRED. The span at 57–70 shows a compositional bias: acidic residues; it reads EGEPGDEGQLEDEG. 4 stretches are compositionally biased toward basic and acidic residues: residues 71–86, 102–113, 121–160, and 196–206; these read NQEK…KPQS, AAEKRPAEDYVP, DRGT…EELR, and GQKDLEDVPYV.

This sequence belongs to the TFS-II family. TFA subfamily.

The protein resides in the nucleus. In terms of biological role, may be involved in transcriptional regulation. This Homo sapiens (Human) protein is Transcription elongation factor A protein-like 5 (TCEAL5).